We begin with the raw amino-acid sequence, 370 residues long: Gap junction delta-4 protein (370 aa).

At 1–19 (MEGVDLLGFLIITLNCNVT) the chain is on the cytoplasmic side. The chain crosses the membrane as a helical span at residues 20–40 (MVGKLWFVLTMLLRMLVIVLA). At 41-76 (GRPVYQDEQERFVCNTLQPGCANVCYDVFSPVSHLR) the chain is on the extracellular side. The helical transmembrane segment at 77–97 (FWLIQGVCVLLPSAVFSVYVL) threads the bilayer. At 98–146 (HRGATLAALGPRRCPDPREPASGQRRCPRPFGERGGLQVPDFSAGYIIH) the chain is on the cytoplasmic side. Residues 147-167 (LLLRTLLEAAFGALHYFLFGF) form a helical membrane-spanning segment. The Extracellular portion of the chain corresponds to 168-196 (LAPKKFPCTRPPCTGVVDCYVSRPTEKSL). A helical membrane pass occupies residues 197 to 217 (LMLFLWAVSALSFLLGLADLV). The Cytoplasmic portion of the chain corresponds to 218–370 (CSLRRRMRRR…HLRARKSEWV (153 aa)). The interval 224–370 (MRRRPGPPTS…HLRARKSEWV (147 aa)) is disordered. A compositionally biased stretch (basic and acidic residues) spans 246–260 (AEGRRTDEEGGREEE). Residues 331 to 346 (PSAAPSRLAAPPSCSS) are compositionally biased toward low complexity.

The protein belongs to the connexin family. Delta-type subfamily. In terms of assembly, a connexon is composed of a hexamer of connexins. Expressed in pancreas, kidney, skeletal muscle, liver, placenta, and heart.

Its subcellular location is the cell membrane. It is found in the cell junction. It localises to the gap junction. In terms of biological role, one gap junction consists of a cluster of closely packed pairs of transmembrane channels, the connexons, through which materials of low MW diffuse from one cell to a neighboring cell. The polypeptide is Gap junction delta-4 protein (GJD4) (Homo sapiens (Human)).